Here is a 607-residue protein sequence, read N- to C-terminus: T-box transcription factor TBX18 (607 aa).

The Engrailed homology 1 repressor signature appears at 18–28; the sequence is HAFSVEALIGA. The interval 30–141 is disordered; that stretch reads KQQQLQKKRR…PLPSPQAPRV (112 aa). The Nuclear localization signal motif lies at 36–40; sequence KKRRK. The span at 44–53 shows a compositional bias: low complexity; the sequence is EEAAGAVDDG. Positions 143 to 330 form a DNA-binding region, T-box; sequence LQGAELWKRF…RNPFAKGFRD (188 aa).

As to quaternary structure, homodimer. Can form a heterodimer with TBX15. Interacts with GATA4 and NKX2-5. Interacts with PAX3. Interacts (via engrailed homology 1 repressor motif) with TLE3; this interaction represses TBX18 transcriptional activity. Interacts with SIX1.

Its subcellular location is the nucleus. In terms of biological role, acts as a transcriptional repressor involved in developmental processes of a variety of tissues and organs, including the heart and coronary vessels, the ureter and the vertebral column. Required for embryonic development of the sino atrial node (SAN) head area. The polypeptide is T-box transcription factor TBX18 (TBX18) (Homo sapiens (Human)).